We begin with the raw amino-acid sequence, 121 residues long: Large ribosomal subunit protein bL19 (121 aa).

This sequence belongs to the bacterial ribosomal protein bL19 family.

Its function is as follows. This protein is located at the 30S-50S ribosomal subunit interface and may play a role in the structure and function of the aminoacyl-tRNA binding site. The chain is Large ribosomal subunit protein bL19 (rplS) from Chlamydia muridarum (strain MoPn / Nigg).